A 289-amino-acid chain; its full sequence is Probable endonuclease 4 (289 aa).

9 residues coordinate Zn(2+): His-75, His-115, Glu-153, Asp-187, His-190, His-224, Asp-237, His-239, and Glu-269.

This sequence belongs to the AP endonuclease 2 family. Zn(2+) is required as a cofactor.

It catalyses the reaction Endonucleolytic cleavage to 5'-phosphooligonucleotide end-products.. Endonuclease IV plays a role in DNA repair. It cleaves phosphodiester bonds at apurinic or apyrimidinic (AP) sites, generating a 3'-hydroxyl group and a 5'-terminal sugar phosphate. This is Probable endonuclease 4 from Chlamydia caviae (strain ATCC VR-813 / DSM 19441 / 03DC25 / GPIC) (Chlamydophila caviae).